The sequence spans 245 residues: AP-1-like transcription factor YAP5 (245 aa).

The segment covering 34-47 (LPHRAAQRRKRVHR) has biased composition (basic residues). The tract at residues 34 to 77 (LPHRAAQRRKRVHRLHEDYETEENDEELQKKKRQNRDAQRAYRE) is disordered. The bZIP domain occupies 58–121 (DEELQKKKRQ…QAKESENHAL (64 aa)). Residues 63–82 (KKKRQNRDAQRAYRERKNNK) form a basic motif region. Over residues 68–77 (NRDAQRAYRE) the composition is skewed to basic and acidic residues. Residues 86–114 (LEETIESLSKVVKNYETKLNRLQNELQAK) form a leucine-zipper region.

It belongs to the bZIP family. YAP subfamily. As to quaternary structure, homodimer.

Its subcellular location is the cytoplasm. The protein resides in the nucleus. Functionally, transcription activator involved in the regulation of genes expressed in response to environmental changes and metabolic requirements. According to genome-wide promoter binding and gene expression studies it is a coregulator for the expression of ribosomal genes, while its own expression is induced by the cell cycle specific activator SBF (SWI4-SWI6). The chain is AP-1-like transcription factor YAP5 (YAP5) from Saccharomyces cerevisiae (strain ATCC 204508 / S288c) (Baker's yeast).